The following is a 2962-amino-acid chain: Sex determination and dosage compensation protein sdc-2 (2962 aa).

Disordered stretches follow at residues 1 to 28 (MSDE…ADPD) and 1061 to 1110 (DKRS…QVDP). Positions 15-27 (SFNESDSPDEADP) are enriched in acidic residues. Coiled coils occupy residues 995–1085 (LESA…LADK) and 1140–1268 (REER…KRVS). Disordered regions lie at residues 1535–1554 (PASL…GSPV) and 2198–2227 (LDSS…NQLD). Residues 2212–2225 (FEDSPSEDENDENQ) are compositionally biased toward acidic residues.

As to quaternary structure, component of the SDC complex, which consists of sdc-1, sdc-2 and sdc-3. Within the complex, interacts with sdc-1 and sdc-3. As to expression, expressed in hermaphrodites (XX), but absent in males (XO) (at protein level).

The protein resides in the chromosome. Component of the SDC complex that functions in sex determination and in X chromosome dosage compensation specifically in hermaphrodite (XX) animals. Required for the recruitment of the condensin I-like dosage compensation complex to the male sex-determining autosomal gene her-1, thereby contributing to its repression and initiating hermaphrodite sexual development. Plays a central role in X-chromosome recognition and in the recruitment and assembly of the dosage compensation complex and the dosage compensation protein dpy-21 onto the X chromosomes in hermaphrodites, which leads to a reduction of X-linked gene transcription and an equalization of X-linked gene expression between the sexes. May confer protection against toxicity induced by heavy metals such as arsenite. The sequence is that of Sex determination and dosage compensation protein sdc-2 from Caenorhabditis elegans.